The following is a 798-amino-acid chain: Nuclear cap-binding protein subunit 1 (798 aa).

In terms of domain architecture, MIF4G spans 28 to 241 (EKKLQGVIGK…SLSAQIEALR (214 aa)). The segment at 663-686 (NKIKEEDDEESDIKMDEDETKEEK) is disordered. Residues 668-682 (EDDEESDIKMDEDET) are compositionally biased toward acidic residues.

Belongs to the NCBP1 family. As to quaternary structure, component of the nuclear cap-binding complex (CBC), a heterodimer composed of ncbp-1 and ncbp-1 that interacts with m7GpppG-capped RNA.

The protein localises to the nucleus. In terms of biological role, component of the cap-binding complex (CBC), which binds cotranscriptionally to the 5'-cap of pre-mRNAs and is involved in various processes such as pre-mRNA splicing and RNA-mediated gene silencing (RNAi). The CBC complex is involved in miRNA-mediated RNA interference and is required for primary microRNAs (miRNAs) processing. In the CBC complex, ncbp-1 does not bind directly capped RNAs (m7GpppG-capped RNA) but is required to stabilize the movement of the N-terminal loop of ncbp-2 and lock the CBC into a high affinity cap-binding state with the cap structure. This Caenorhabditis elegans protein is Nuclear cap-binding protein subunit 1 (ncbp-1).